A 290-amino-acid polypeptide reads, in one-letter code: 33 kDa chaperonin (290 aa).

Cystine bridges form between Cys236/Cys238 and Cys269/Cys272.

Belongs to the HSP33 family. Under oxidizing conditions two disulfide bonds are formed involving the reactive cysteines. Under reducing conditions zinc is bound to the reactive cysteines and the protein is inactive.

The protein resides in the cytoplasm. Redox regulated molecular chaperone. Protects both thermally unfolding and oxidatively damaged proteins from irreversible aggregation. Plays an important role in the bacterial defense system toward oxidative stress. The polypeptide is 33 kDa chaperonin (Acholeplasma laidlawii (strain PG-8A)).